Consider the following 739-residue polypeptide: Phosphoribosylformylglycinamidine synthase subunit PurL (739 aa).

H54 is an active-site residue. Y57 and K96 together coordinate ATP. E98 serves as a coordination point for Mg(2+). Residues 99–102 (SHNH) and R121 contribute to the substrate site. The Proton acceptor role is filled by H100. Mg(2+) is bound at residue D122. Position 245 (Q245) interacts with substrate. Position 273 (D273) interacts with Mg(2+). 317-319 (ESQ) contacts substrate. Residues D500 and G537 each contribute to the ATP site. N538 contributes to the Mg(2+) binding site. S540 lines the substrate pocket.

The protein belongs to the FGAMS family. As to quaternary structure, monomer. Part of the FGAM synthase complex composed of 1 PurL, 1 PurQ and 2 PurS subunits.

It is found in the cytoplasm. The catalysed reaction is N(2)-formyl-N(1)-(5-phospho-beta-D-ribosyl)glycinamide + L-glutamine + ATP + H2O = 2-formamido-N(1)-(5-O-phospho-beta-D-ribosyl)acetamidine + L-glutamate + ADP + phosphate + H(+). Its pathway is purine metabolism; IMP biosynthesis via de novo pathway; 5-amino-1-(5-phospho-D-ribosyl)imidazole from N(2)-formyl-N(1)-(5-phospho-D-ribosyl)glycinamide: step 1/2. Part of the phosphoribosylformylglycinamidine synthase complex involved in the purines biosynthetic pathway. Catalyzes the ATP-dependent conversion of formylglycinamide ribonucleotide (FGAR) and glutamine to yield formylglycinamidine ribonucleotide (FGAM) and glutamate. The FGAM synthase complex is composed of three subunits. PurQ produces an ammonia molecule by converting glutamine to glutamate. PurL transfers the ammonia molecule to FGAR to form FGAM in an ATP-dependent manner. PurS interacts with PurQ and PurL and is thought to assist in the transfer of the ammonia molecule from PurQ to PurL. This Bacillus mycoides (strain KBAB4) (Bacillus weihenstephanensis) protein is Phosphoribosylformylglycinamidine synthase subunit PurL.